The chain runs to 291 residues: Presqualene diphosphate synthase (291 aa).

Residues 1–23 (MTSAMKKIQPEAFSEKSSDSQAS) are disordered.

This sequence belongs to the phytoene/squalene synthase family. HpnD subfamily.

It carries out the reaction 2 (2E,6E)-farnesyl diphosphate = presqualene diphosphate + diphosphate. Its pathway is secondary metabolite biosynthesis; hopanoid biosynthesis. In terms of biological role, involved in the biosynthesis of the hopanoid precursor squalene (SQ) from farnesyl diphosphate (FPP). Catalyzes the first step, the formation of presqualene diphosphate (PSPP) from two molecules of FPP. The sequence is that of Presqualene diphosphate synthase from Zymomonas mobilis subsp. mobilis (strain ATCC 31821 / ZM4 / CP4).